Reading from the N-terminus, the 352-residue chain is Histidinol-phosphate aminotransferase (352 aa).

Position 221 is an N6-(pyridoxal phosphate)lysine (Lys-221).

This sequence belongs to the class-II pyridoxal-phosphate-dependent aminotransferase family. Histidinol-phosphate aminotransferase subfamily. In terms of assembly, homodimer. Pyridoxal 5'-phosphate serves as cofactor.

It carries out the reaction L-histidinol phosphate + 2-oxoglutarate = 3-(imidazol-4-yl)-2-oxopropyl phosphate + L-glutamate. It functions in the pathway amino-acid biosynthesis; L-histidine biosynthesis; L-histidine from 5-phospho-alpha-D-ribose 1-diphosphate: step 7/9. The chain is Histidinol-phosphate aminotransferase from Staphylococcus aureus (strain bovine RF122 / ET3-1).